The following is a 192-amino-acid chain: Nucleosome assembly protein 1-like 5 (192 aa).

Residues 1–12 (MADSQNQGSAEP) are compositionally biased toward polar residues. The segment at 1–76 (MADSQNQGSA…APKPRNDFIE (76 aa)) is disordered. Composition is skewed to low complexity over residues 15 to 28 (AAAA…AAAA) and 40 to 55 (GDSD…VVGQ). A coiled-coil region spans residues 86–112 (VLALKKLQKRCDKIEAKFDKEFQALEK). The segment at 136-192 (AWTLEGDEEDDDDDEYEDEEEGEEEDEEEEEPAAEAAGTAAAKDEGPHSAVPDDAKK) is disordered. Acidic residues predominate over residues 140 to 168 (EGDEEDDDDDEYEDEEEGEEEDEEEEEPA). Residues 177–192 (AKDEGPHSAVPDDAKK) are compositionally biased toward basic and acidic residues.

It belongs to the nucleosome assembly protein (NAP) family.

It localises to the nucleus. The protein is Nucleosome assembly protein 1-like 5 (NAP1L5) of Bos taurus (Bovine).